Reading from the N-terminus, the 171-residue chain is S-ribosylhomocysteine lyase (171 aa).

Fe cation-binding residues include His54, His58, and Cys128.

It belongs to the LuxS family. Homodimer. The cofactor is Fe cation.

It carries out the reaction S-(5-deoxy-D-ribos-5-yl)-L-homocysteine = (S)-4,5-dihydroxypentane-2,3-dione + L-homocysteine. Its function is as follows. Involved in the synthesis of autoinducer 2 (AI-2) which is secreted by bacteria and is used to communicate both the cell density and the metabolic potential of the environment. The regulation of gene expression in response to changes in cell density is called quorum sensing. Catalyzes the transformation of S-ribosylhomocysteine (RHC) to homocysteine (HC) and 4,5-dihydroxy-2,3-pentadione (DPD). This chain is S-ribosylhomocysteine lyase, found in Salmonella arizonae (strain ATCC BAA-731 / CDC346-86 / RSK2980).